The following is a 442-amino-acid chain: Cell division protein FtsZ (442 aa).

GTP-binding positions include 18–22 (GGGVN), 105–107 (GTG), E136, R140, and D184. The segment covering 329-341 (AAPAAEPVQQQVP) has biased composition (low complexity). The interval 329 to 442 (AAPAAEPVQQ…DDLDVPSFLQ (114 aa)) is disordered. Basic and acidic residues-rich tracts occupy residues 349–362 (PEKE…REEN) and 390–431 (NDRD…RDDR).

Belongs to the FtsZ family. As to quaternary structure, homodimer. Polymerizes to form a dynamic ring structure in a strictly GTP-dependent manner. Interacts directly with several other division proteins.

The protein resides in the cytoplasm. Its function is as follows. Essential cell division protein that forms a contractile ring structure (Z ring) at the future cell division site. The regulation of the ring assembly controls the timing and the location of cell division. One of the functions of the FtsZ ring is to recruit other cell division proteins to the septum to produce a new cell wall between the dividing cells. Binds GTP and shows GTPase activity. The protein is Cell division protein FtsZ of Corynebacterium glutamicum (strain ATCC 13032 / DSM 20300 / JCM 1318 / BCRC 11384 / CCUG 27702 / LMG 3730 / NBRC 12168 / NCIMB 10025 / NRRL B-2784 / 534).